A 150-amino-acid polypeptide reads, in one-letter code: Transcription antitermination protein NusB (150 aa).

It belongs to the NusB family.

Its function is as follows. Involved in transcription antitermination. Required for transcription of ribosomal RNA (rRNA) genes. Binds specifically to the boxA antiterminator sequence of the ribosomal RNA (rrn) operons. The protein is Transcription antitermination protein NusB of Chloroflexus aggregans (strain MD-66 / DSM 9485).